Here is a 939-residue protein sequence, read N- to C-terminus: Isoleucine--tRNA ligase (939 aa).

The short motif at 57-67 (PYANGHIHIGH) is the 'HIGH' region element. Glu563 serves as a coordination point for L-isoleucyl-5'-AMP. A 'KMSKS' region motif is present at residues 604–608 (KMSKS). Residue Lys607 coordinates ATP. The Zn(2+) site is built by Cys903, Cys906, Cys921, and Cys924.

This sequence belongs to the class-I aminoacyl-tRNA synthetase family. IleS type 1 subfamily. In terms of assembly, monomer. Zn(2+) serves as cofactor.

Its subcellular location is the cytoplasm. It carries out the reaction tRNA(Ile) + L-isoleucine + ATP = L-isoleucyl-tRNA(Ile) + AMP + diphosphate. In terms of biological role, catalyzes the attachment of isoleucine to tRNA(Ile). As IleRS can inadvertently accommodate and process structurally similar amino acids such as valine, to avoid such errors it has two additional distinct tRNA(Ile)-dependent editing activities. One activity is designated as 'pretransfer' editing and involves the hydrolysis of activated Val-AMP. The other activity is designated 'posttransfer' editing and involves deacylation of mischarged Val-tRNA(Ile). The chain is Isoleucine--tRNA ligase from Sulfurihydrogenibium sp. (strain YO3AOP1).